The sequence spans 94 residues: Long neurotoxin LNTX8 (94 aa).

An N-terminal signal peptide occupies residues M1 to T21. 5 cysteine pairs are disulfide-bonded: C24–C43, C36–C64, C49–C53, C68–C79, and C80–C85.

It belongs to the three-finger toxin family. Long-chain subfamily. Type II alpha-neurotoxin sub-subfamily. Expressed by the venom gland.

Its subcellular location is the secreted. Functionally, binds with high affinity to muscular (alpha-1/CHRNA1) and neuronal (alpha-7/CHRNA7) nicotinic acetylcholine receptor (nAChR) and inhibits acetylcholine from binding to the receptor, thereby impairing neuromuscular and neuronal transmission. This Ophiophagus hannah (King cobra) protein is Long neurotoxin LNTX8.